A 180-amino-acid chain; its full sequence is ADP-ribosylation factor 4 (180 aa).

Gly-2 carries the N-myristoyl glycine lipid modification. GTP is bound by residues 24–31 (GLDAAGKT), 67–71 (DVGGQ), and 126–129 (NKQD). A Phosphoserine modification is found at Ser-147.

This sequence belongs to the small GTPase superfamily. Arf family. As to quaternary structure, forms a complex containing RAB11A, ASAP1, RAB3IP, RAP11FIP3 and ARF4; the complex promotes preciliary trafficking; the complex binds to RHO in photoreceptor cells and promotes RHO ciliary transport.

It is found in the golgi apparatus. It localises to the membrane. Its function is as follows. GTP-binding protein that functions as an allosteric activator of the cholera toxin catalytic subunit, an ADP-ribosyltransferase. Involved in protein trafficking; may modulate vesicle budding and uncoating within the Golgi apparatus. Part of the ciliary targeting complex containing Rab11, ASAP1, Rabin8/RAB3IP, RAB11FIP3 and ARF4, which direct preciliary vesicle trafficking to mother centriole and ciliogenesis initiation. The protein is ADP-ribosylation factor 4 (Arf4) of Mus musculus (Mouse).